Reading from the N-terminus, the 470-residue chain is Ribosomal protein uS12 methylthiotransferase RimO (470 aa).

One can recognise an MTTase N-terminal domain in the interval 33–143 (NKIGFVSLGC…VLEHVHQYAP (111 aa)). Residues Cys42, Cys78, Cys107, Cys175, Cys179, and Cys182 each contribute to the [4Fe-4S] cluster site. Positions 161–398 (LTPKHYAYLK…MLVQQEISAA (238 aa)) constitute a Radical SAM core domain. In terms of domain architecture, TRAM spans 401–467 (QKRIGSTMQV…EYDLWGSILH (67 aa)).

This sequence belongs to the methylthiotransferase family. RimO subfamily. It depends on [4Fe-4S] cluster as a cofactor.

Its subcellular location is the cytoplasm. It carries out the reaction L-aspartate(89)-[ribosomal protein uS12]-hydrogen + (sulfur carrier)-SH + AH2 + 2 S-adenosyl-L-methionine = 3-methylsulfanyl-L-aspartate(89)-[ribosomal protein uS12]-hydrogen + (sulfur carrier)-H + 5'-deoxyadenosine + L-methionine + A + S-adenosyl-L-homocysteine + 2 H(+). Functionally, catalyzes the methylthiolation of an aspartic acid residue of ribosomal protein uS12. The polypeptide is Ribosomal protein uS12 methylthiotransferase RimO (Vibrio cholerae serotype O1 (strain ATCC 39315 / El Tor Inaba N16961)).